The primary structure comprises 303 residues: Recombination-associated protein RdgC (303 aa).

This sequence belongs to the RdgC family.

Its subcellular location is the cytoplasm. The protein resides in the nucleoid. In terms of biological role, may be involved in recombination. The protein is Recombination-associated protein RdgC of Edwardsiella ictaluri (strain 93-146).